Reading from the N-terminus, the 599-residue chain is Elongation factor 4 (599 aa).

Positions 5-187 (SHIRNFSIIA…RLVHTIPAPE (183 aa)) constitute a tr-type G domain. GTP is bound by residues 17–22 (DHGKST) and 134–137 (NKMD).

Belongs to the TRAFAC class translation factor GTPase superfamily. Classic translation factor GTPase family. LepA subfamily.

The protein resides in the cell inner membrane. It catalyses the reaction GTP + H2O = GDP + phosphate + H(+). Required for accurate and efficient protein synthesis under certain stress conditions. May act as a fidelity factor of the translation reaction, by catalyzing a one-codon backward translocation of tRNAs on improperly translocated ribosomes. Back-translocation proceeds from a post-translocation (POST) complex to a pre-translocation (PRE) complex, thus giving elongation factor G a second chance to translocate the tRNAs correctly. Binds to ribosomes in a GTP-dependent manner. The sequence is that of Elongation factor 4 from Pseudomonas putida (strain ATCC 47054 / DSM 6125 / CFBP 8728 / NCIMB 11950 / KT2440).